A 1478-amino-acid chain; its full sequence is GTPase-activating protein and VPS9 domain-containing protein 1 (1478 aa).

In terms of domain architecture, Ras-GAP spans 147–385; that stretch reads SYLLQVLRYL…AAFLDVVIGG (239 aa). Ser227 bears the Phosphoserine mark. Residues Thr390 and Thr458 each carry the phosphothreonine modification. Tyr460 is modified (phosphotyrosine). Ser466 bears the Phosphoserine mark. Residue Thr470 is modified to Phosphothreonine. Phosphoserine is present on residues Ser566 and Ser569. 3 disordered regions span residues 574-608, 739-820, and 846-874; these read GISE…GSNG, ESCS…PPSQ, and HYAR…LPNF. The segment covering 578–588 has biased composition (polar residues); sequence GPSNRSNSVSS. 3 positions are modified to phosphoserine: Ser742, Ser746, and Ser757. Polar residues predominate over residues 758 to 777; the sequence is SRPSTPGLSVVSGISATSED. Residue Thr762 is modified to Phosphothreonine. The residue at position 766 (Ser766) is a Phosphoserine. Positions 778 to 789 are enriched in basic and acidic residues; that stretch reads IPNKIEDLRSEC. A phosphoserine mark is found at Ser876, Ser902, Ser903, Ser908, Ser914, and Ser966. Over residues 889–902 the composition is skewed to basic and acidic residues; it reads QRHSYPERLVRSRS. Disordered stretches follow at residues 889–1023 and 1043–1064; these read QRHS…PRLS and TSPS…DRDL. 2 stretches are compositionally biased toward basic and acidic residues: residues 954–975 and 997–1008; these read DSSR…DRNR and EKQEKDKDDLGP. Residues 1012–1023 show a composition bias toward polar residues; sequence STLTDDPSPRLS. Phosphoserine occurs at positions 1019, 1046, 1096, and 1103. The region spanning 1338-1478 is the VPS9 domain; it reads ILRDQVLHEH…EFIKTIDDRK (141 aa).

Belongs to the GAPVD1 family. As to quaternary structure, interacts with TRIP10/CIP4. Interacts with RAB5A. (Microbial infection) Interacts with P.falciparum (strain 3D7) CK1. In terms of tissue distribution, expressed in erythrocytes (at protein level).

Its subcellular location is the membrane. The protein localises to the endosome. Its function is as follows. Acts both as a GTPase-activating protein (GAP) and a guanine nucleotide exchange factor (GEF), and participates in various processes such as endocytosis, insulin receptor internalization or LC2A4/GLUT4 trafficking. Acts as a GEF for the Ras-related protein RAB31 by exchanging bound GDP for free GTP, leading to regulate LC2A4/GLUT4 trafficking. In the absence of insulin, it maintains RAB31 in an active state and promotes a futile cycle between LC2A4/GLUT4 storage vesicles and early endosomes, retaining LC2A4/GLUT4 inside the cells. Upon insulin stimulation, it is translocated to the plasma membrane, releasing LC2A4/GLUT4 from intracellular storage vesicles. Also involved in EGFR trafficking and degradation, possibly by promoting EGFR ubiquitination and subsequent degradation by the proteasome. Has GEF activity for Rab5 and GAP activity for Ras. This chain is GTPase-activating protein and VPS9 domain-containing protein 1 (GAPVD1), found in Homo sapiens (Human).